The primary structure comprises 101 residues: Small ribosomal subunit protein uS14 (101 aa).

It belongs to the universal ribosomal protein uS14 family. Part of the 30S ribosomal subunit. Contacts proteins S3 and S10.

Binds 16S rRNA, required for the assembly of 30S particles and may also be responsible for determining the conformation of the 16S rRNA at the A site. In Vibrio vulnificus (strain CMCP6), this protein is Small ribosomal subunit protein uS14.